Consider the following 406-residue polypeptide: Cysteine desulfurase IscS (406 aa).

Pyridoxal 5'-phosphate is bound by residues 75 to 76 (AT), Asn-155, Gln-183, and 203 to 205 (SSH). An N6-(pyridoxal phosphate)lysine modification is found at Lys-206. A pyridoxal 5'-phosphate-binding site is contributed by Thr-243. The Cysteine persulfide intermediate role is filled by Cys-330. Cys-330 contributes to the [2Fe-2S] cluster binding site.

The protein belongs to the class-V pyridoxal-phosphate-dependent aminotransferase family. NifS/IscS subfamily. Homodimer. Forms a heterotetramer with IscU, interacts with other sulfur acceptors. The cofactor is pyridoxal 5'-phosphate.

It localises to the cytoplasm. The enzyme catalyses (sulfur carrier)-H + L-cysteine = (sulfur carrier)-SH + L-alanine. The protein operates within cofactor biosynthesis; iron-sulfur cluster biosynthesis. Master enzyme that delivers sulfur to a number of partners involved in Fe-S cluster assembly, tRNA modification or cofactor biosynthesis. Catalyzes the removal of elemental sulfur atoms from cysteine to produce alanine. Functions as a sulfur delivery protein for Fe-S cluster synthesis onto IscU, an Fe-S scaffold assembly protein, as well as other S acceptor proteins. The polypeptide is Cysteine desulfurase IscS (Haemophilus ducreyi (strain 35000HP / ATCC 700724)).